The primary structure comprises 668 residues: Patellin-5 (668 aa).

Residues 1–263 (MSQDSATTTP…STTTSTVASR (263 aa)) form a disordered region. 4 stretches are compositionally biased toward basic and acidic residues: residues 55–68 (ESNH…EKVT), 82–100 (AAED…ETAK), 107–125 (TAED…ETVK), and 132–150 (VAED…ETVK). Polar residues predominate over residues 170–186 (TPETETSEADTSLLVTS). The segment covering 218-231 (VEDWTEPELPDEAV) has biased composition (acidic residues). Residues 244–254 (PEPQTPPPPPS) are compositionally biased toward pro residues. S290 is modified (phosphoserine). In terms of domain architecture, CRAL-TRIO spans 377-552 (DENLGDDLDK…QYGGLSVDNC (176 aa)). In terms of domain architecture, GOLD spans 556–662 (SDFTHDDIAT…KKMLIYRFKV (107 aa)).

It belongs to the patellin family.

Its subcellular location is the membrane. It localises to the cytoplasm. Functionally, carrier protein that may be involved in membrane-trafficking events associated with cell plate formation during cytokinesis. Binds to some hydrophobic molecules such as phosphoinositides and promotes their transfer between the different cellular sites. The polypeptide is Patellin-5 (PATL5) (Arabidopsis thaliana (Mouse-ear cress)).